Here is a 443-residue protein sequence, read N- to C-terminus: Phosphomevalonate kinase ERG8 (443 aa).

ATP is bound at residue 160–170 (ANKTGLGSSAA).

Belongs to the GHMP kinase family. Mevalonate kinase subfamily.

It catalyses the reaction (R)-5-phosphomevalonate + ATP = (R)-5-diphosphomevalonate + ADP. It functions in the pathway isoprenoid biosynthesis; isopentenyl diphosphate biosynthesis via mevalonate pathway; isopentenyl diphosphate from (R)-mevalonate: step 2/3. Functionally, phosphomevalonate kinase; part of the second module of ergosterol biosynthesis pathway that includes the middle steps of the pathway. ERG8 converts 5-phosphomevalonate to 5-diphosphomevalonate. The second module is carried out in the vacuole and involves the formation of farnesyl diphosphate, which is also an important intermediate in the biosynthesis of ubiquinone, dolichol, heme and prenylated proteins. Activity by the mevalonate kinase ERG12 (FG05912) first converts mevalonate into 5-phosphomevalonate. 5-phosphomevalonate is then further converted to 5-diphosphomevalonate by the phosphomevalonate kinase ERG8 (FG09764). The diphosphomevalonate decarboxylase ERG19 (FG10424) then produces isopentenyl diphosphate. The isopentenyl-diphosphate delta-isomerase IDI1 (FG09722) then catalyzes the 1,3-allylic rearrangement of the homoallylic substrate isopentenyl (IPP) to its highly electrophilic allylic isomer, dimethylallyl diphosphate (DMAPP). Finally the farnesyl diphosphate synthase ERG20 (FG06784) catalyzes the sequential condensation of isopentenyl pyrophosphate with dimethylallyl pyrophosphate, and then with the resultant geranylpyrophosphate to the ultimate product farnesyl pyrophosphate. The protein is Phosphomevalonate kinase ERG8 of Gibberella zeae (strain ATCC MYA-4620 / CBS 123657 / FGSC 9075 / NRRL 31084 / PH-1) (Wheat head blight fungus).